A 612-amino-acid chain; its full sequence is uncharacterized protein (612 aa).

Positions 176–196 (LVQRNNATTSPTTDSASENNE) are enriched in polar residues. The segment at 176–203 (LVQRNNATTSPTTDSASENNESVPSLTS) is disordered.

To yeast YNL034w.

This is an uncharacterized protein from Saccharomyces cerevisiae (strain ATCC 204508 / S288c) (Baker's yeast).